The following is a 445-amino-acid chain: Argininosuccinate synthase (445 aa).

Residues 17–25 (AFSGGLDTS) and Ala43 contribute to the ATP site. An L-citrulline-binding site is contributed by Tyr99. Residues Gly129 and Thr131 each contribute to the ATP site. L-aspartate-binding residues include Thr131, Asn135, and Asp136. Residue Asn135 participates in L-citrulline binding. ATP is bound at residue Asp136. Residues Arg139 and Ser192 each contribute to the L-citrulline site. ATP is bound at residue Asp194. The L-citrulline site is built by Thr201, Glu203, and Glu280.

The protein belongs to the argininosuccinate synthase family. Type 2 subfamily. Homotetramer.

The protein localises to the cytoplasm. It catalyses the reaction L-citrulline + L-aspartate + ATP = 2-(N(omega)-L-arginino)succinate + AMP + diphosphate + H(+). It functions in the pathway amino-acid biosynthesis; L-arginine biosynthesis; L-arginine from L-ornithine and carbamoyl phosphate: step 2/3. The polypeptide is Argininosuccinate synthase (Rhodopseudomonas palustris (strain BisA53)).